A 250-amino-acid chain; its full sequence is mRNA-decapping protein g5R (250 aa).

Residues 97–243 enclose the Nudix hydrolase domain; that stretch reads QKFRKNWLLP…IIGPAFNFIK (147 aa). A Nudix box motif is present at residues 132 to 153; the sequence is GKPKEDESDLTCAIREFEEETG. Glutamate 138 contacts Mg(2+). Glutamate 147 acts as the Nucleophile in catalysis. 2 residues coordinate Mg(2+): glutamate 151 and aspartate 173.

This sequence belongs to the Nudix hydrolase family. DIPP subfamily. In terms of assembly, interacts with host RPL23A. The cofactor is Mg(2+). Requires Mn(2+) as cofactor.

It localises to the host rough endoplasmic reticulum. It catalyses the reaction diphospho-myo-inositol polyphosphate + H2O = myo-inositol polyphosphate + phosphate.. Decapping enzyme required for the removal of the 5'-end m7GpppN cap tethered to viral and host mRNAs to allow their decay in cells. May therefore accelerate viral and cellular mRNA turnover to eliminate competing host mRNAs and allow stage-specific synthesis of viral proteins. Acceleration of the turnover of cellular transcripts may even promote the shutoff of host protein synthesis. In addition to the mRNA cap, g5R also efficiently hydrolyzes diphosphoinositol polyphosphates. Down-regulation of the level of PP-InsP5 (diphosphoinositol pentakisphosphate) may play a role in viral manipulation of the cellular secretory pathway, a step necessary for the formation of virions. Binds viral and cellular poly(A) mRNAs, thereby decreasing both types of mRNAs. This is mRNA-decapping protein g5R from African swine fever virus (isolate Tick/South Africa/Pretoriuskop Pr4/1996) (ASFV).